A 609-amino-acid polypeptide reads, in one-letter code: Frizzled and smoothened-like protein E (609 aa).

A signal peptide spans 1-20; that stretch reads MEMIRIFLIYLILKIIIING. The Extracellular portion of the chain corresponds to 21 to 259; it reads ENNEYSKGYG…QWKRVYDMAK (239 aa). In terms of domain architecture, FZ spans 35 to 192; the sequence is FPGSKCLNYV…GLYKVPCIDP (158 aa). 4 disulfide bridges follow: cysteine 40/cysteine 118, cysteine 53/cysteine 111, cysteine 100/cysteine 149, and cysteine 138/cysteine 189. N-linked (GlcNAc...) asparagine glycans are attached at residues asparagine 75, asparagine 130, asparagine 172, asparagine 198, asparagine 217, and asparagine 245. Residues 260 to 280 traverse the membrane as a helical segment; that stretch reads TLSSISFICACYNILTFGILN. The Cytoplasmic portion of the chain corresponds to 281 to 288; it reads RKRKSKYN. Residues 289-309 traverse the membrane as a helical segment; the sequence is ICITLMSTSIALVYLTDIIKF. At 310–337 the chain is on the extracellular side; that stretch reads GYGIEEFLCPEPGRSAVQNDAACGITGA. A helical transmembrane segment spans residues 338 to 358; it reads MFHFGITYCCCWAMTMSIVLF. Residues 359 to 365 lie on the Cytoplasmic side of the membrane; it reads CSVKRIK. A helical transmembrane segment spans residues 366 to 386; the sequence is LFYFRHFMIGNTIFTIITTVI. Over 387-408 the chain is Extracellular; it reads LLSAKKMVAGTGYIECWVRERW. Residues 409-429 traverse the membrane as a helical segment; the sequence is FVITLFWLPCGIGLSIGIFCI. Over 430 to 457 the chain is Cytoplasmic; that stretch reads GGVIHEIYNISKKVNIRESEFILRQIKP. Residues 458–478 traverse the membrane as a helical segment; that stretch reads FSLVFSVAGSFLYLFIFFFDV. Topologically, residues 479-511 are extracellular; it reads ERKIDSYKAAVADYVLCLLSGGSEETCFTTGPN. The chain crosses the membrane as a helical span at residues 512 to 532; sequence YASFFIFYFFIRVFGVLFFSI. Residues 533–609 lie on the Cytoplasmic side of the membrane; it reads YGTSRVARDI…DSKSIELEKK (77 aa). Over residues 559–570 the composition is skewed to polar residues; that stretch reads ESGISRNNSRTD. Positions 559–609 are disordered; sequence ESGISRNNSRTDISFGKNNNSKNSNNSKNSNNSKNSNNSDNDSKSIELEKK. A compositionally biased stretch (low complexity) spans 575–598; it reads KNNNSKNSNNSKNSNNSKNSNNSD. Residues 599–609 are compositionally biased toward basic and acidic residues; that stretch reads NDSKSIELEKK.

This sequence belongs to the G-protein coupled receptor Fz/Smo family.

It is found in the membrane. This is Frizzled and smoothened-like protein E (fslE) from Dictyostelium discoideum (Social amoeba).